The sequence spans 471 residues: V-type ATP synthase beta chain (471 aa).

Belongs to the ATPase alpha/beta chains family.

In terms of biological role, produces ATP from ADP in the presence of a proton gradient across the membrane. The V-type beta chain is a regulatory subunit. The chain is V-type ATP synthase beta chain from Streptococcus pyogenes serotype M28 (strain MGAS6180).